Reading from the N-terminus, the 687-residue chain is Dictomallein (687 aa).

2 disordered regions span residues 1 to 45 and 73 to 112; these read MGNG…SRRL and TAGGAAPLTPAVASPAGPTGSTPGSTPGATTAPAPSSTSA. A Peptidase M66 domain is found at 233–501; the sequence is PVFGTDADVQ…QAWIASRVLA (269 aa). His393 contacts Zn(2+). Glu394 is an active-site residue. Positions 397 and 403 each coordinate Zn(2+).

This sequence belongs to the dictomallein family. Zn(2+) is required as a cofactor.

The polypeptide is Dictomallein (dtmL) (Burkholderia mallei (strain NCTC 10247)).